The chain runs to 60 residues: Large ribosomal subunit protein uL30 (60 aa).

The protein belongs to the universal ribosomal protein uL30 family. In terms of assembly, part of the 50S ribosomal subunit.

The chain is Large ribosomal subunit protein uL30 from Streptomyces coelicolor (strain ATCC BAA-471 / A3(2) / M145).